We begin with the raw amino-acid sequence, 355 residues long: Thiamine thiazole synthase, chloroplastic (355 aa).

The transit peptide at 1–42 (MAAMATTASSLLKTSFAGARLPAAARNPTVSVAPRTGGAICN) directs the protein to the chloroplast. Substrate-binding positions include alanine 96, 116 to 117 (EQ), glycine 124, and valine 189. Cysteine 218 carries the post-translational modification 2,3-didehydroalanine (Cys). Residues aspartate 220, histidine 235, methionine 287, and 297–299 (RMG) each bind substrate.

Belongs to the THI4 family. In terms of assembly, homooctamer. Fe cation is required as a cofactor. Post-translationally, during the catalytic reaction, a sulfide is transferred from Cys-218 to a reaction intermediate, generating a dehydroalanine residue.

The protein localises to the plastid. It localises to the chloroplast. The enzyme catalyses [ADP-thiazole synthase]-L-cysteine + glycine + NAD(+) = [ADP-thiazole synthase]-dehydroalanine + ADP-5-ethyl-4-methylthiazole-2-carboxylate + nicotinamide + 3 H2O + 2 H(+). Functionally, involved in biosynthesis of the thiamine precursor thiazole. Catalyzes the conversion of NAD and glycine to adenosine diphosphate 5-(2-hydroxyethyl)-4-methylthiazole-2-carboxylic acid (ADT), an adenylated thiazole intermediate. The reaction includes an iron-dependent sulfide transfer from a conserved cysteine residue of the protein to a thiazole intermediate. The enzyme can only undergo a single turnover, which suggests it is a suicide enzyme. May have additional roles in adaptation to various stress conditions and in DNA damage tolerance. Required fot thiamine accumulation and disease resistance toward the bacterial pathogen Xanthomonas oryzae pv oryzae (Xoo) and the fungal pathogen Magnaporthe oryzae. During infection by Xoo, functions positively in the defense pathway initiated by the resistance genes XA3 and XA26 by promoting thiamine synthesis. May function upstream of the defense-related proteins peroxidases, phenylalanine ammonia-lyases and pathogenesis-related proteins. In terms of biological role, (Microbial infection) During infection by Xanthomonas oryzae pv oryzae (Xoo), THI1 interacts with the type III effector virulence factor xadA from Xoo, which is an adhesin-like outer membrane protein. This probably attenuates the function of THI1 in defense response. The protein is Thiamine thiazole synthase, chloroplastic of Oryza sativa subsp. japonica (Rice).